Here is a 225-residue protein sequence, read N- to C-terminus: E3 ubiquitin-protein ligase ATL76 (225 aa).

A helical transmembrane segment spans residues 59-79; the sequence is LMLLSVLICGIICCLGLHYII. An RING-type; atypical zinc finger spans residues 135-177; it reads CVICLSDFVSGEQLRLLPKCNHGFHVRCIDKWLQHHLTCPKCR.

The protein belongs to the RING-type zinc finger family. ATL subfamily.

The protein localises to the membrane. The enzyme catalyses S-ubiquitinyl-[E2 ubiquitin-conjugating enzyme]-L-cysteine + [acceptor protein]-L-lysine = [E2 ubiquitin-conjugating enzyme]-L-cysteine + N(6)-ubiquitinyl-[acceptor protein]-L-lysine.. It functions in the pathway protein modification; protein ubiquitination. Functionally, E3 ubiquitin-protein ligase able to catalyze polyubiquitination with ubiquitin-conjugating enzyme E2 UBC8 in vitro. In Arabidopsis thaliana (Mouse-ear cress), this protein is E3 ubiquitin-protein ligase ATL76 (ATL76).